A 207-amino-acid polypeptide reads, in one-letter code: Urease accessory protein UreG (207 aa).

14–21 contacts GTP; the sequence is GPVGSGKT.

The protein belongs to the SIMIBI class G3E GTPase family. UreG subfamily. In terms of assembly, homodimer. UreD, UreF and UreG form a complex that acts as a GTP-hydrolysis-dependent molecular chaperone, activating the urease apoprotein by helping to assemble the nickel containing metallocenter of UreC. The UreE protein probably delivers the nickel.

Its subcellular location is the cytoplasm. Its function is as follows. Facilitates the functional incorporation of the urease nickel metallocenter. This process requires GTP hydrolysis, probably effectuated by UreG. This Chelativorans sp. (strain BNC1) protein is Urease accessory protein UreG.